A 135-amino-acid chain; its full sequence is UPF0216 protein MTH_949 (135 aa).

It belongs to the UPF0216 family.

The sequence is that of UPF0216 protein MTH_949 from Methanothermobacter thermautotrophicus (strain ATCC 29096 / DSM 1053 / JCM 10044 / NBRC 100330 / Delta H) (Methanobacterium thermoautotrophicum).